We begin with the raw amino-acid sequence, 362 residues long: MEDPNRMMGGHGGLMPPNYGMPTNDGQAGVDNDPRKQDIGEILQQIMNITDQSLDEAQARKHTLNCHRMKPVLFAVLCEIKEKTVLSLRNTQEEEPPDPQLMRLDNMLIAEGVAGPEKGGGADFLSQSDLTGGQDNAIEHSDYRAKLAQIRQIYHQELEKYEQACSEFTTHVMNLLREQSRTRPITPKEIERMVQIIHRKFSSIQMQLKQSTCEAVMILRSRFLDARRKRRNFSKQASEILNEYFYSHLSNPYPSEEAKEELARKCGITVSQVSNWFGNKRIRYKKNIGKAQEEANLYAAKKAAGASPYSMGGPPSGAATPMMSPAPAQDSMGYSLGSGGYDQQQPYDGSMGYDQLHQDLSP.

The PBC domain maps to 34 to 225; the sequence is PRKQDIGEIL…VMILRSRFLD (192 aa). Positions 41–120 are PBC-A; the sequence is EILQQIMNIT…EGVAGPEKGG (80 aa). Residues 123–225 are PBC-B; sequence DFLSQSDLTG…VMILRSRFLD (103 aa). The homeobox; TALE-type DNA-binding region spans 226–288; the sequence is ARRKRRNFSK…NKRIRYKKNI (63 aa). The tract at residues 305 to 362 is disordered; sequence GASPYSMGGPPSGAATPMMSPAPAQDSMGYSLGSGGYDQQQPYDGSMGYDQLHQDLSP.

Belongs to the TALE/PBX homeobox family.

The protein resides in the nucleus. In terms of biological role, transcription factor which acts with the selector homeodomain proteins altering the regulation of downstream target genes such as wingless (wg), teashirt (tsh) and decapentaplegic (dpp), thus affecting segmental identity. The polypeptide is Homeobox protein extradenticle (Anopheles gambiae (African malaria mosquito)).